A 393-amino-acid chain; its full sequence is 2-methylcitrate synthase (393 aa).

Substrate is bound by residues Arg92 and His207. The active site involves His242. Lys275 to Phe279 serves as a coordination point for CoA. His281 is a catalytic residue. Arg290 provides a ligand contact to substrate. Asp332 is a catalytic residue. Positions 357 and 376 each coordinate substrate.

It belongs to the citrate synthase family. In terms of assembly, homodimer.

The enzyme catalyses propanoyl-CoA + oxaloacetate + H2O = (2S,3S)-2-methylcitrate + CoA + H(+). The catalysed reaction is oxaloacetate + acetyl-CoA + H2O = citrate + CoA + H(+). Its pathway is organic acid metabolism; propanoate degradation. It participates in carbohydrate metabolism; tricarboxylic acid cycle; isocitrate from oxaloacetate: step 1/2. Functionally, involved in the catabolism of short chain fatty acids (SCFA) via the tricarboxylic acid (TCA)(acetyl degradation route) and via the 2-methylcitrate cycle I (propionate degradation route). Catalyzes the Claisen condensation of propionyl-CoA and oxaloacetate (OAA) to yield 2-methylcitrate (2-MC) and CoA. Also catalyzes the condensation of oxaloacetate with acetyl-CoA. In Mycobacterium tuberculosis (strain ATCC 35801 / TMC 107 / Erdman), this protein is 2-methylcitrate synthase (gltA1).